The chain runs to 469 residues: MTQFAADKPYIVKDMSLAKWGRIEFDMAEIEMPGLMALREEYKDSQPLKGARIAGSLHMTVQTAILIETLTALGAEVRWASCNIFSTQDHAAAAIAETGVPVFATKGETLEEYWDYADAIFHWPDGETANMILDDGGDATMYLILGEKAENDPSVLNHPKSEEETFLFAQIKKRIAATPGWFAKAKAAIQGVSEETTTGVMRLYQMQKRGELPFPAINVNDSVTKSKFDNRYGCRESLVDAIRRGTDVMMAGKKALVFGYGDVGKGSAESLAGAGARVYVTEIDPICALQACMDGFEVVRAEDVIGEMDIFVTATGNKDILTVDHMRAMKDMAIVCNIGHFDNEIQVESLKNYQWTNVKPQVDLVNFPEGHRIILLSEGRLVNLGNATGHPSFVMSASFTNQTLAQIELWTKGENYTNEVYILPKHLDEKVAALHLDKLGAKLTVLSDEQADYIGVPQHGPFKAEHYRY.

Substrate is bound by residues Thr60, Asp135, and Glu195. Residue Thr196 to Thr198 participates in NAD(+) binding. The substrate site is built by Lys225 and Asp229. Residues Asn230, Gly259–Gly264, Glu282, Asn317, Ile338–His340, and Asn383 contribute to the NAD(+) site.

It belongs to the adenosylhomocysteinase family. The cofactor is NAD(+).

The protein resides in the cytoplasm. It carries out the reaction S-adenosyl-L-homocysteine + H2O = L-homocysteine + adenosine. The protein operates within amino-acid biosynthesis; L-homocysteine biosynthesis; L-homocysteine from S-adenosyl-L-homocysteine: step 1/1. In terms of biological role, may play a key role in the regulation of the intracellular concentration of adenosylhomocysteine. In Maricaulis maris (strain MCS10) (Caulobacter maris), this protein is Adenosylhomocysteinase.